Reading from the N-terminus, the 274-residue chain is tRNA (guanine-N(1)-)-methyltransferase (274 aa).

Residues G116 and 140 to 145 (LGDYVL) each bind S-adenosyl-L-methionine.

Belongs to the RNA methyltransferase TrmD family. In terms of assembly, homodimer.

Its subcellular location is the cytoplasm. It catalyses the reaction guanosine(37) in tRNA + S-adenosyl-L-methionine = N(1)-methylguanosine(37) in tRNA + S-adenosyl-L-homocysteine + H(+). Its function is as follows. Specifically methylates guanosine-37 in various tRNAs. The sequence is that of tRNA (guanine-N(1)-)-methyltransferase from Arthrobacter sp. (strain FB24).